Consider the following 488-residue polypeptide: Multidrug resistance outer membrane protein MdtP (488 aa).

The N-terminal stretch at 1–23 is a signal peptide; sequence MINRQLSRLLLCSILGSTTLISG. The N-palmitoyl cysteine moiety is linked to residue Cys-24. Cys-24 is lipidated: S-diacylglycerol cysteine.

It belongs to the outer membrane factor (OMF) (TC 1.B.17) family. Could be part of a tripartite efflux system composed of MdtN, MdtO and MdtP.

It is found in the cell outer membrane. Could be involved in resistance to puromycin, acriflavine and tetraphenylarsonium chloride. This Escherichia coli O157:H7 protein is Multidrug resistance outer membrane protein MdtP (mdtP).